We begin with the raw amino-acid sequence, 282 residues long: Protein Ku (282 aa).

A Ku domain is found at 9-189; sequence VNFGLVNVPV…KPELSEAELK (181 aa).

As to quaternary structure, homodimer. Interacts with host LigD, maybe via the LigD Pol domain.

Functionally, required for replication of viruses with short cos ends (4 bases). Stimulates dsDNA end-joining by host LigD; in conjunction with M.smegmatis or M.tuberculosis LigD can reconstitute NHEJ in S.cerevisiae. Binds dsDNA with either blunt, 5'- or 3-overhangs, protecting it from host exonuclease degradation. In Mycobacterium phage Omega (Mycobacteriophage Omega), this protein is Protein Ku (206).